Here is an 882-residue protein sequence, read N- to C-terminus: MNAETPEGSAAPPSPASTSAKTVTDKTNKKRASPSGDSEQPTKVTKRRAARACVSCRARKVRCDVVEGAPCGNCRWDNVECVVQESRRRKKNLLTASTAGQPVSTEAQLRCKTAASNPMGMSTADLRRPSSGSAISTSSIDGPSSFLSNSGLDNHVPHMIYQRSGYRHDPVLLNKLHSNDGNPQRPVWSNNLMTTPSVFDSLRTFRFISSLEEQDSTAQLPAFLRPLPTKIAAEDVKYLQIKGALSVPTLPLQNALLQAYVEYVHPYMPLMDLNSFLGIINTRDGQNGQTSLFLYQAVMFAASAFVDMKYLREGGYTTRKAARKSFFQKTRLLYDFDYESDRLVLVQALLLMTYWYETPDDQKDTWHWMGVAISLAHTIGLHRNPGSTSMAPAKQKLWKRIWWSCFMRDRLIALGMRRPTRIKDEDFDVPMLEESDFEIEVLADDNTVIPASCTLVRNLDMQRELAIMCISKAQLCVCISHMLKAQYSVLIRDKMKPENTTNSTMMLFPNKQLDNVEGVTEVDHELMAWAESLPTCCQYRTLTPLDVKDGRSTIAVQRTLLHMVYYTTISALHRPQFLPSSPLQAPTTSRQVQDMSRLRVRDAAMHITRMATELHQCRLERFLPTTGVTVILPAMIIHLLEMKNPAPQARERATRGFRQCMRVMEKLREVYAAADYATGFLDAALRKAAIDINASVGPSTLAMMKRVPVEFSAQTPPPENAPYMTAAESLFNERPKEHRPQPTPTMMPPNTVNAAALELSTNSPPQTELEESPAGLTPSVSAASEEIQLDVGNMDLDFMQGHDEFDWNAVAGTDFDVDQWLQFPPEGVTNQDDNLIAGVLGRGVEEPTMSAEQALNWAINAEADATARQPDGRVQGEVPAQA.

A compositionally biased stretch (low complexity) spans M1 to A20. Positions M1–A49 are disordered. The segment at residues C53–C81 is a DNA-binding region (zn(2)-C6 fungal-type). The segment at N117–S148 is disordered. Low complexity predominate over residues S130–S139.

Its subcellular location is the nucleus. This is Cutinase transcription factor 1 beta (CTF1-BETA) from Fusarium vanettenii (Neocosmospora pisi).